The primary structure comprises 1359 residues: NPC1-like intracellular cholesterol transporter 1 (1359 aa).

Residues 1–21 form the signal peptide; sequence MAEAGLRGWLLWALLLRLAQS. Residues 22–284 are Extracellular-facing; that stretch reads EPYTTIHQPG…TFYLGQMPGS (263 aa). Cystine bridges form between cysteine 33–cysteine 90, cysteine 39–cysteine 57, cysteine 78–cysteine 125, cysteine 91–cysteine 129, cysteine 113–cysteine 254, cysteine 116–cysteine 172, cysteine 189–cysteine 197, cysteine 243–cysteine 259, and cysteine 256–cysteine 263. N-linked (GlcNAc...) asparagine glycosylation occurs at asparagine 54. N-linked (GlcNAc...) asparagine glycosylation is found at asparagine 132 and asparagine 138. An N-linked (GlcNAc...) asparagine glycan is attached at asparagine 244. Residues 285-305 traverse the membrane as a helical segment; that stretch reads LVLIIILCSVFAVVTILLVGF. Residues 306–351 are Cytoplasmic-facing; it reads RVAPARDKSKMVDPKKGTSLSDKLSFSTHTLLGQFFQGWGTWVASW. The helical transmembrane segment at 352 to 372 threads the bilayer; sequence PLTILVLSVIPVVALAAGLVF. Residues 373–632 lie on the Extracellular side of the membrane; sequence TELTTDPVEL…DEINRTTAED (260 aa). N-linked (GlcNAc...) asparagine glycosylation is found at asparagine 416, asparagine 431, asparagine 464, asparagine 479, asparagine 497, and asparagine 506. Residues cysteine 471 and cysteine 485 are joined by a disulfide bond. Cysteine 525 and cysteine 542 are disulfide-bonded. A glycan (N-linked (GlcNAc...) asparagine) is linked at asparagine 626. An SSD domain is found at 632–797; that stretch reads DLPIFATSYI…MSAFVALLSL (166 aa). A helical membrane pass occupies residues 633-653; the sequence is LPIFATSYIVIFLYISLALGS. Residues 654-666 lie on the Cytoplasmic side of the membrane; it reads YSSWSRVMVDSKA. The chain crosses the membrane as a helical span at residues 667–687; that stretch reads TLGLGGVAVVLGAVMAAMGFF. Topologically, residues 688 to 696 are extracellular; sequence SYLGIRSSL. A helical transmembrane segment spans residues 697–717; that stretch reads VILQVVPFLVLSVGADNIFIF. Over 718–742 the chain is Cytoplasmic; the sequence is VLEYQRLPRRPGEPREVHIGRALGR. Residues 743 to 763 traverse the membrane as a helical segment; that stretch reads VAPSMLLCSLSEAICFFLGAL. Over 764-776 the chain is Extracellular; the sequence is TPMPAVRTFALTS. Residues 777-797 form a helical membrane-spanning segment; it reads GLAVILDFLLQMSAFVALLSL. The Cytoplasmic portion of the chain corresponds to 798 to 846; the sequence is DSKRQEASRLDVCCCVKPQELPPPGQGEGLLLGFFQKAYAPFLLHWITR. A helical transmembrane segment spans residues 847–867; that stretch reads GVVLLLFLALFGVSLYSMCHI. Residues 868-1139 are Extracellular-facing; that stretch reads SVGLDQELAL…EQYLTILPEG (272 aa). 3 disulfides stabilise this stretch: cysteine 920-cysteine 925, cysteine 966-cysteine 1024, and cysteine 980-cysteine 989. A helical membrane pass occupies residues 1140–1160; the sequence is LFMLSLCLVPTFAVSCLLLGL. The Cytoplasmic segment spans residues 1161–1168; it reads DLRSGLLN. A helical transmembrane segment spans residues 1169 to 1189; the sequence is LLSIVMILVDTVGFMALWGIS. The Extracellular portion of the chain corresponds to 1190-1191; sequence YN. The chain crosses the membrane as a helical span at residues 1192-1212; sequence AVSLINLVSAVGMSVEFVSHI. Over 1213 to 1236 the chain is Cytoplasmic; it reads TRSFAISTKPTWLERAKEATISMG. The chain crosses the membrane as a helical span at residues 1237–1257; sequence SAVFAGVAMTNLPGILVLGLA. Topologically, residues 1258–1268 are extracellular; it reads KAQLIQIFFFR. Residues 1269 to 1289 form a helical membrane-spanning segment; that stretch reads LNLLITLLGLLHGLVFLPVIL. The Cytoplasmic portion of the chain corresponds to 1290–1359; it reads SYVGPDVNPA…NFLPNNGRQF (70 aa).

This sequence belongs to the patched family. In terms of assembly, interacts with RAB11A, MYO5B and RAB11FIP2. Interaction with RAB11A, MYO5B and RAB11FIP2 is required for proper transport to the plasma membrane upon cholesterol depletion. Interacts with NPC2. Interacts with LIMA1. In terms of processing, highly glycosylated. As to expression, widely expressed. Expressed in liver. Also expressed in small intestine, pancreas, kidney, lung, pancreas, spleen, heart, gall bladder, brain, testis, stomach and muscle.

The protein resides in the apical cell membrane. It is found in the cell membrane. The protein localises to the cytoplasmic vesicle membrane. The catalysed reaction is cholesterol(in) = cholesterol(out). It carries out the reaction sitosterol(out) = sitosterol(in). Functionally, plays a major role in cholesterol homeostasis. Critical for the uptake of cholesterol across the plasma membrane of the intestinal enterocyte. Involved in plant sterol absorption, it transports sitosterol, although at lower rates than cholesterol. Is the direct molecular target of ezetimibe, a drug that inhibits cholesterol absorption and is approved for the treatment of hypercholesterolemia. May have a function in the transport of multiple lipids and their homeostasis, thereby influencing lipid metabolism regulation. May be involved in caveolin trafficking from the plasma membrane. In addition, acts as a negative regulator of NPC2 and down-regulates its expression and secretion by inhibiting its maturation and accelerating its degradation. The protein is NPC1-like intracellular cholesterol transporter 1 of Homo sapiens (Human).